Reading from the N-terminus, the 127-residue chain is Thioredoxin-3, mitochondrial (127 aa).

Residues 1–21 constitute a mitochondrion transit peptide; sequence MLFYKPVMRMAVRPLKSIRFQ. Positions 22-127 constitute a Thioredoxin domain; the sequence is SSYTSITKLT…TALEKGIKDL (106 aa). Residues cysteine 55 and cysteine 58 each act as nucleophile in the active site. Cysteine 55 and cysteine 58 form a disulfide bridge.

Belongs to the thioredoxin family.

The protein localises to the mitochondrion. This is Thioredoxin-3, mitochondrial (TRX3) from Saccharomyces cerevisiae (strain ATCC 204508 / S288c) (Baker's yeast).